Here is a 165-residue protein sequence, read N- to C-terminus: Zinc finger C2H2 protein ECU11_0990 (165 aa).

Composition is skewed to basic and acidic residues over residues 1–10 (MEAESPKERV) and 19–32 (DPER…DTSS). Positions 1–38 (MEAESPKERVQGVSGESWDPERGVKEREDTSSKKGKGV) are disordered. 2 consecutive C2H2-type zinc fingers follow at residues 103–125 (FGCE…KAQH) and 136–158 (LFCP…SRYH).

The sequence is that of Zinc finger C2H2 protein ECU11_0990 from Encephalitozoon cuniculi (strain GB-M1) (Microsporidian parasite).